Here is a 166-residue protein sequence, read N- to C-terminus: Heme-degrading monooxygenase HmoB (166 aa).

Asn33 lines the Fe cation pocket. Residues 66–153 (FAVLNNIAVT…SAGIDTTSIF (88 aa)) enclose the ABM domain. His138 provides a ligand contact to heme.

Belongs to the antibiotic biosynthesis monooxygenase family. Homodimer.

The protein localises to the cytoplasm. The catalysed reaction is heme b + 3 reduced [NADPH--hemoprotein reductase] + 3 O2 = biliverdin IXalpha + CO + Fe(2+) + 3 oxidized [NADPH--hemoprotein reductase] + 3 H2O + H(+). Catalyzes the oxidative degradation of the heme macrocyclic porphyrin ring in the presence of a suitable electron donor such as ascorbate or NADPH--cytochrome P450 reductase, with subsequent release of free iron. The protein is Heme-degrading monooxygenase HmoB (hmoB) of Bacillus subtilis (strain 168).